We begin with the raw amino-acid sequence, 278 residues long: Putative transcription factor kapC (278 aa).

Residues 1–10 (MQPALAPAPH) are compositionally biased toward pro residues. The segment at 1–121 (MQPALAPAPH…QNRAAQRAFR (121 aa)) is disordered. Over residues 56 to 68 (PTATTSPRDQNNI) the composition is skewed to polar residues. In terms of domain architecture, bZIP spans 103–166 (PLSTSKRAAQ…EYVINLQSRL (64 aa)). The basic motif stretch occupies residues 104-127 (LSTSKRAAQNRAAQRAFRQRKESY). A compositionally biased stretch (low complexity) spans 109–119 (RAAQNRAAQRA). Residues 131–162 (LEEQVKEYEVMSQEYKALQAENYQLREYVINL) are leucine-zipper. The interval 173 to 278 (VPELPGNIDL…PPTHGLPMVS (106 aa)) is disordered. A compositionally biased stretch (low complexity) spans 198–214 (PGQAGASAPPQGSPQSQ). A compositionally biased stretch (polar residues) spans 215 to 226 (VSIANDDMNSLN). Residues 254–269 (GRGDETADPSETKTEP) show a composition bias toward basic and acidic residues.

The protein belongs to the bZIP family.

It localises to the nucleus. Functionally, putative transcription factor. The sequence is that of Putative transcription factor kapC (kapC) from Emericella nidulans (strain FGSC A4 / ATCC 38163 / CBS 112.46 / NRRL 194 / M139) (Aspergillus nidulans).